The sequence spans 181 residues: High mobility group protein B4 (181 aa).

Positions 9 to 79 form a DNA-binding region, HMG box 1; that stretch reads PKVNVSSYIH…RYQQEMMNYI (71 aa). Residues 80-89 show a composition bias toward basic residues; sequence GKRRKRRKRD. The interval 80–100 is disordered; the sequence is GKRRKRRKRDPKAPRKPPSSF. A DNA-binding region (HMG box 2) is located at residues 93–161; it reads PRKPPSSFLL…KYFEEQEAYR (69 aa).

The protein belongs to the HMGB family. In terms of tissue distribution, expressed in adult germ cells (at protein level).

The protein localises to the nucleus. It is found in the chromosome. This is High mobility group protein B4 (Hmgb4) from Mus musculus (Mouse).